The primary structure comprises 438 residues: 3-phosphoshikimate 1-carboxyvinyltransferase (438 aa).

Residues Lys28, Ser29, and Arg33 each contribute to the 3-phosphoshikimate site. Position 28 (Lys28) interacts with phosphoenolpyruvate. Residues Gly97 and Arg125 each contribute to the phosphoenolpyruvate site. Residues Ser168, Ser169, Gln170, Glu316, and His343 each contribute to the 3-phosphoshikimate site. Gln170 provides a ligand contact to phosphoenolpyruvate. Glu316 (proton acceptor) is an active-site residue. Phosphoenolpyruvate contacts are provided by Arg347, Arg388, and Lys413.

Belongs to the EPSP synthase family. In terms of assembly, monomer.

The protein localises to the cytoplasm. The enzyme catalyses 3-phosphoshikimate + phosphoenolpyruvate = 5-O-(1-carboxyvinyl)-3-phosphoshikimate + phosphate. It functions in the pathway metabolic intermediate biosynthesis; chorismate biosynthesis; chorismate from D-erythrose 4-phosphate and phosphoenolpyruvate: step 6/7. Catalyzes the transfer of the enolpyruvyl moiety of phosphoenolpyruvate (PEP) to the 5-hydroxyl of shikimate-3-phosphate (S3P) to produce enolpyruvyl shikimate-3-phosphate and inorganic phosphate. The protein is 3-phosphoshikimate 1-carboxyvinyltransferase of Rhodococcus jostii (strain RHA1).